Consider the following 886-residue polypeptide: UPF0592 membrane protein C7D4.03c (886 aa).

The tract at residues 87 to 112 is disordered; that stretch reads ILNEPYNESPSSSSSDSSSRSTSPFS. Positions 95–112 are enriched in low complexity; sequence SPSSSSSDSSSRSTSPFS. 3 helical membrane-spanning segments follow: residues 277–297, 374–394, and 400–420; these read FCAS…DHFL, GGFF…QFSF, and VIYF…LTIS.

This sequence belongs to the UPF0592 family.

Its subcellular location is the membrane. The polypeptide is UPF0592 membrane protein C7D4.03c (Schizosaccharomyces pombe (strain 972 / ATCC 24843) (Fission yeast)).